The following is a 332-amino-acid chain: GTP cyclohydrolase-2 (332 aa).

2 disordered regions span residues 1-20 (MASKDIVHPQPERRHGSETH) and 25-46 (PLLSPTLTPSHIPSQTPQIPPE). Residues 29 to 41 (PTLTPSHIPSQTP) show a composition bias toward polar residues. 171–175 (RIHSE) is a GTP binding site. Residues Cys176, Cys187, and Cys189 each coordinate Zn(2+). GTP is bound by residues Gln192, 214–216 (EGR), and Thr236. Residue Asp248 is the Proton acceptor of the active site. Arg250 acts as the Nucleophile in catalysis. Thr271 and Lys276 together coordinate GTP.

It belongs to the GTP cyclohydrolase II family. The cofactor is Zn(2+).

The catalysed reaction is GTP + 4 H2O = 2,5-diamino-6-hydroxy-4-(5-phosphoribosylamino)-pyrimidine + formate + 2 phosphate + 3 H(+). It participates in cofactor biosynthesis; riboflavin biosynthesis; 5-amino-6-(D-ribitylamino)uracil from GTP: step 1/4. Its function is as follows. Catalyzes the conversion of GTP to 2,5-diamino-6-ribosylamino-4(3H)-pyrimidinone 5'-phosphate (DARP), formate and pyrophosphate. The sequence is that of GTP cyclohydrolase-2 (RIB1) from Meyerozyma guilliermondii (strain ATCC 6260 / CBS 566 / DSM 6381 / JCM 1539 / NBRC 10279 / NRRL Y-324) (Yeast).